The following is a 1184-amino-acid chain: DNA-directed RNA polymerase subunit beta' (1184 aa).

4 residues coordinate Zn(2+): C60, C62, C75, and C78. Mg(2+) contacts are provided by D449, D451, and D453. Zn(2+)-binding residues include C794, C867, C874, and C877. Residues 1165 to 1184 form a disordered region; sequence NDQQERQDKEKEETEVKASN.

It belongs to the RNA polymerase beta' chain family. The RNAP catalytic core consists of 2 alpha, 1 beta, 1 beta' and 1 omega subunit. When a sigma factor is associated with the core the holoenzyme is formed, which can initiate transcription. The cofactor is Mg(2+). Zn(2+) is required as a cofactor.

The enzyme catalyses RNA(n) + a ribonucleoside 5'-triphosphate = RNA(n+1) + diphosphate. DNA-dependent RNA polymerase catalyzes the transcription of DNA into RNA using the four ribonucleoside triphosphates as substrates. The protein is DNA-directed RNA polymerase subunit beta' of Thermoanaerobacter pseudethanolicus (strain ATCC 33223 / 39E) (Clostridium thermohydrosulfuricum).